A 302-amino-acid chain; its full sequence is Sulfate adenylyltransferase subunit 2 (302 aa).

Belongs to the PAPS reductase family. CysD subfamily. In terms of assembly, heterodimer composed of CysD, the smaller subunit, and CysN.

It catalyses the reaction sulfate + ATP + H(+) = adenosine 5'-phosphosulfate + diphosphate. It participates in sulfur metabolism; hydrogen sulfide biosynthesis; sulfite from sulfate: step 1/3. Its function is as follows. With CysN forms the ATP sulfurylase (ATPS) that catalyzes the adenylation of sulfate producing adenosine 5'-phosphosulfate (APS) and diphosphate, the first enzymatic step in sulfur assimilation pathway. APS synthesis involves the formation of a high-energy phosphoric-sulfuric acid anhydride bond driven by GTP hydrolysis by CysN coupled to ATP hydrolysis by CysD. This is Sulfate adenylyltransferase subunit 2 from Shigella dysenteriae serotype 1 (strain Sd197).